The following is a 270-amino-acid chain: Acyl-[acyl-carrier-protein]--UDP-N-acetylglucosamine O-acyltransferase (270 aa).

This sequence belongs to the transferase hexapeptide repeat family. LpxA subfamily. Homotrimer.

The protein resides in the cytoplasm. The enzyme catalyses a (3R)-hydroxyacyl-[ACP] + UDP-N-acetyl-alpha-D-glucosamine = a UDP-3-O-[(3R)-3-hydroxyacyl]-N-acetyl-alpha-D-glucosamine + holo-[ACP]. It participates in glycolipid biosynthesis; lipid IV(A) biosynthesis; lipid IV(A) from (3R)-3-hydroxytetradecanoyl-[acyl-carrier-protein] and UDP-N-acetyl-alpha-D-glucosamine: step 1/6. Involved in the biosynthesis of lipid A, a phosphorylated glycolipid that anchors the lipopolysaccharide to the outer membrane of the cell. The polypeptide is Acyl-[acyl-carrier-protein]--UDP-N-acetylglucosamine O-acyltransferase (Helicobacter pylori (strain HPAG1)).